The chain runs to 134 residues: Small ribosomal subunit protein uS11 (134 aa).

Disordered regions lie at residues 1–22 and 114–134; these read MPPKGRQGAAKKVRRKEKKNVA and SIQDVTPTPHNGCRPPKRRRV. Residues 9–22 are compositionally biased toward basic residues; sequence AAKKVRRKEKKNVA.

The protein belongs to the universal ribosomal protein uS11 family. Part of the 30S ribosomal subunit. Interacts with proteins S7 and S18. Binds to IF-3.

Located on the platform of the 30S subunit, it bridges several disparate RNA helices of the 16S rRNA. Forms part of the Shine-Dalgarno cleft in the 70S ribosome. This chain is Small ribosomal subunit protein uS11, found in Streptomyces avermitilis (strain ATCC 31267 / DSM 46492 / JCM 5070 / NBRC 14893 / NCIMB 12804 / NRRL 8165 / MA-4680).